The following is a 39-amino-acid chain: Photosystem II reaction center protein Psb30 (39 aa).

The chain crosses the membrane as a helical span at residues 12–32 (IFQLTFVALIMLAGPFVIFLL).

The protein belongs to the Psb30/Ycf12 family. PSII is composed of 1 copy each of membrane proteins PsbA, PsbB, PsbC, PsbD, PsbE, PsbF, PsbH, PsbI, PsbJ, PsbK, PsbL, PsbM, PsbT, PsbX, PsbY, PsbZ, Psb30/Ycf12, peripheral proteins PsbO, CyanoQ (PsbQ), PsbU, PsbV and a large number of cofactors. It forms dimeric complexes.

It localises to the cellular thylakoid membrane. Functionally, a core subunit of photosystem II (PSII), probably helps stabilize the reaction center. The polypeptide is Photosystem II reaction center protein Psb30 (Microcystis aeruginosa (strain NIES-843 / IAM M-2473)).